We begin with the raw amino-acid sequence, 429 residues long: MIELDINASDKSLSHRAVIFSLLAQKPCFVRNFLMGEDCLSSLEIAQNLGAKVENTAKNSFKITPPTTIKEPNKILNCNNSGTTMRLYSGLLSAQKGLFVLSGDNSLNARPMKRIIEPLKAFGAKILGREDNHFAPLVILGSPLKACHYESPIASAQVKSAFILSALQAQGASTYKESELSRNHTEIMLKSLGADIHNQDGVLKISPLEKPLEAFDFTIANDPSSAFFFALACAITPKSRLLLKNVLLNPTRIEAFEVLKKMGASIEYAIQSKDLEMIGDIYVEHAPLKAINIDQNIASLIDEIPALSIAMLFAKGKSMVKNAKDLRAKESDRIKAVVSNFKALGIECEEFEDGFYVEGLEDISPLKQRFSRIKPPLIKSFNDHRIAMSFAVLTLALPLEIDNLECANISFPQFKHLLNQFKKGSLNGN.

K11, S12, and R16 together coordinate 3-phosphoshikimate. K11 contributes to the phosphoenolpyruvate binding site. Positions 82 and 110 each coordinate phosphoenolpyruvate. 4 residues coordinate 3-phosphoshikimate: S155, Q157, D302, and K329. Residue Q157 participates in phosphoenolpyruvate binding. D302 functions as the Proton acceptor in the catalytic mechanism. Phosphoenolpyruvate contacts are provided by R333 and R385.

It belongs to the EPSP synthase family. Monomer.

The protein resides in the cytoplasm. The catalysed reaction is 3-phosphoshikimate + phosphoenolpyruvate = 5-O-(1-carboxyvinyl)-3-phosphoshikimate + phosphate. Its pathway is metabolic intermediate biosynthesis; chorismate biosynthesis; chorismate from D-erythrose 4-phosphate and phosphoenolpyruvate: step 6/7. Catalyzes the transfer of the enolpyruvyl moiety of phosphoenolpyruvate (PEP) to the 5-hydroxyl of shikimate-3-phosphate (S3P) to produce enolpyruvyl shikimate-3-phosphate and inorganic phosphate. The chain is 3-phosphoshikimate 1-carboxyvinyltransferase from Helicobacter pylori (strain ATCC 700392 / 26695) (Campylobacter pylori).